We begin with the raw amino-acid sequence, 258 residues long: MASTSLLQSTSSSFAGVRFHCRTSAAPRVGLSSFTVKAAAGTAVFVDKAEAETINRLKTNYIEKMVPLLKEEFSYSNILEVPKVVKIVVNCGIGDASQNAKGLDAAINELALITGQRPVKTKAKTSIAGFKVREGMTLGIAVTLRGNLMYSFLDRLINLALPRTRDFQGVNPNSFDGHGNYSVGFREQSVFPEIKPEIVGKARGMDVCITTTAKTDKEAYKLLSLMGMPFREGSGPSTLVRKKKLKSHHFDAKKGRRY.

The N-terminal 38 residues, 1-38 (MASTSLLQSTSSSFAGVRFHCRTSAAPRVGLSSFTVKA), are a transit peptide targeting the chloroplast.

In terms of assembly, component of the chloroplast large ribosomal subunit (LSU). Mature 70S chloroplast ribosomes of higher plants consist of a small (30S) and a large (50S) subunit. The 30S small subunit contains 1 molecule of ribosomal RNA (16S rRNA) and 24 different proteins. The 50S large subunit contains 3 rRNA molecules (23S, 5S and 4.5S rRNA) and 33 different proteins.

Its subcellular location is the plastid. It is found in the chloroplast. Functionally, component of the chloroplast ribosome (chloro-ribosome), a dedicated translation machinery responsible for the synthesis of chloroplast genome-encoded proteins, including proteins of the transcription and translation machinery and components of the photosynthetic apparatus. The chain is Large ribosomal subunit protein uL5c (RPL5) from Spinacia oleracea (Spinach).